The primary structure comprises 193 residues: Holliday junction branch migration complex subunit RuvA (193 aa).

Residues 1–63 form a domain I region; it reads MIAHIQGKLV…EDSHSLYGFA (63 aa). Residues 64–142 are domain II; it reads EKSEKEIFKL…KLYDLDQVSI (79 aa). The flexible linker stretch occupies residues 143 to 145; sequence SQS. A domain III region spans residues 145–193; sequence SNTNKDEALSALEVLGFIRKSAEKVVEKIVATMPDATVETIIKQALKNL.

Belongs to the RuvA family. In terms of assembly, homotetramer. Forms an RuvA(8)-RuvB(12)-Holliday junction (HJ) complex. HJ DNA is sandwiched between 2 RuvA tetramers; dsDNA enters through RuvA and exits via RuvB. An RuvB hexamer assembles on each DNA strand where it exits the tetramer. Each RuvB hexamer is contacted by two RuvA subunits (via domain III) on 2 adjacent RuvB subunits; this complex drives branch migration. In the full resolvosome a probable DNA-RuvA(4)-RuvB(12)-RuvC(2) complex forms which resolves the HJ.

Its subcellular location is the cytoplasm. Its function is as follows. The RuvA-RuvB-RuvC complex processes Holliday junction (HJ) DNA during genetic recombination and DNA repair, while the RuvA-RuvB complex plays an important role in the rescue of blocked DNA replication forks via replication fork reversal (RFR). RuvA specifically binds to HJ cruciform DNA, conferring on it an open structure. The RuvB hexamer acts as an ATP-dependent pump, pulling dsDNA into and through the RuvAB complex. HJ branch migration allows RuvC to scan DNA until it finds its consensus sequence, where it cleaves and resolves the cruciform DNA. The protein is Holliday junction branch migration complex subunit RuvA of Flavobacterium psychrophilum (strain ATCC 49511 / DSM 21280 / CIP 103535 / JIP02/86).